Consider the following 140-residue polypeptide: Large ribosomal subunit protein uL11 (140 aa).

Belongs to the universal ribosomal protein uL11 family. As to quaternary structure, part of the ribosomal stalk of the 50S ribosomal subunit. Interacts with L10 and the large rRNA to form the base of the stalk. L10 forms an elongated spine to which L12 dimers bind in a sequential fashion forming a multimeric L10(L12)X complex. In terms of processing, one or more lysine residues are methylated.

Forms part of the ribosomal stalk which helps the ribosome interact with GTP-bound translation factors. The sequence is that of Large ribosomal subunit protein uL11 from Lawsonia intracellularis (strain PHE/MN1-00).